The primary structure comprises 360 residues: UPF0324 membrane protein DVU_0123 (360 aa).

The next 10 membrane-spanning stretches (helical) occupy residues 20–42, 57–79, 100–122, 142–164, 171–193, 203–225, 232–254, 278–297, 310–327, and 337–359; these read VTESLPGLLLVCAVALVASFVAP, KDFILAIIFGIIIRNTVGVPAVF, SYSLAGLVSVGAQALVFIAVFLF, AACLAAGMSVCGVSATIAIAPAV, MAYSIAVVLMFGLLALIAFPLIG, FGAFAGVGIVNSAQVLAAGFGFS, AGIYNIGRVVFLPFVVLMLAIMA, FPLFVLGFLAIVCLNTAGVL, EWAFLLGFASIGLTTRLS, and FLFGFGVAGLKAALALAAVLLFM.

Belongs to the UPF0324 family.

It localises to the cell membrane. The chain is UPF0324 membrane protein DVU_0123 from Nitratidesulfovibrio vulgaris (strain ATCC 29579 / DSM 644 / CCUG 34227 / NCIMB 8303 / VKM B-1760 / Hildenborough) (Desulfovibrio vulgaris).